The sequence spans 235 residues: Large ribosomal subunit protein uL3 (235 aa).

The segment at 138–157 (SVSHRSHGSTGGRQDPGKTF) is disordered. Q151 carries the N5-methylglutamine modification.

The protein belongs to the universal ribosomal protein uL3 family. As to quaternary structure, part of the 50S ribosomal subunit. Forms a cluster with proteins L14 and L19. In terms of processing, methylated by PrmB.

Its function is as follows. One of the primary rRNA binding proteins, it binds directly near the 3'-end of the 23S rRNA, where it nucleates assembly of the 50S subunit. In Rhodospirillum centenum (strain ATCC 51521 / SW), this protein is Large ribosomal subunit protein uL3.